The primary structure comprises 274 residues: Nitrogenase iron protein (274 aa).

8-15 (GKGGIGKS) lines the ATP pocket. Residue Cys-94 coordinates [4Fe-4S] cluster. Arg-97 carries the ADP-ribosylarginine; by dinitrogenase reductase ADP-ribosyltransferase modification. A [4Fe-4S] cluster-binding site is contributed by Cys-131.

Belongs to the NifH/BchL/ChlL family. As to quaternary structure, homodimer. [4Fe-4S] cluster serves as cofactor. The reversible ADP-ribosylation of Arg-97 inactivates the nitrogenase reductase and regulates nitrogenase activity.

The enzyme catalyses N2 + 8 reduced [2Fe-2S]-[ferredoxin] + 16 ATP + 16 H2O = H2 + 8 oxidized [2Fe-2S]-[ferredoxin] + 2 NH4(+) + 16 ADP + 16 phosphate + 6 H(+). Its function is as follows. The key enzymatic reactions in nitrogen fixation are catalyzed by the nitrogenase complex, which has 2 components: the iron protein and the molybdenum-iron protein. The chain is Nitrogenase iron protein from Chlorobium chlorochromatii (strain CaD3).